Reading from the N-terminus, the 146-residue chain is 3-hydroxyacyl-[acyl-carrier-protein] dehydratase FabZ (146 aa).

Residue H48 is part of the active site.

It belongs to the thioester dehydratase family. FabZ subfamily.

The protein resides in the cytoplasm. It carries out the reaction a (3R)-hydroxyacyl-[ACP] = a (2E)-enoyl-[ACP] + H2O. Involved in unsaturated fatty acids biosynthesis. Catalyzes the dehydration of short chain beta-hydroxyacyl-ACPs and long chain saturated and unsaturated beta-hydroxyacyl-ACPs. This chain is 3-hydroxyacyl-[acyl-carrier-protein] dehydratase FabZ, found in Campylobacter jejuni subsp. jejuni serotype O:6 (strain 81116 / NCTC 11828).